The primary structure comprises 411 residues: Serpin A3-5 (411 aa).

The signal sequence occupies residues 1 to 24 (MRAERTSFLLALGLLMAGIRSVHC). 5 N-linked (GlcNAc...) asparagine glycosylation sites follow: N100, N180, N230, N264, and N318.

The protein belongs to the serpin family. As to quaternary structure, homodimer.

It is found in the cytoplasmic vesicle. It localises to the secretory vesicle. Its subcellular location is the chromaffin granule. The protein resides in the secreted. Functionally, serine protease inhibitor. The chain is Serpin A3-5 from Bos taurus (Bovine).